The sequence spans 281 residues: MIETLLPASALAFPNIDPVIFRVGPLAVHWYGLGYVVGIMFAWWYGKKLLRSHRLWANNQPPMAPEALDDFVIWAALGVVLGGRIGYVLFYNFSYYISNPLAIPAVWDGGMSFHGGILGTTLAMILFARSRGIKVWSMFDTIAAGVPVGLGVVRVANFINSELWGRVSDVPWAVYFPNGGPLPRHPSQLYEAFLEGVVLFFVLFLLVWVGRKLKKPGFIAGAFVTGYGLSRIVVEFFREPDAQLGYLFGGWLTMGMVLSVPMVLIGLWAMWRANRTAAKDA.

4 helical membrane passes run 23–43 (VGPL…MFAW), 71–91 (FVIW…VLFY), 107–127 (WDGG…MILF), and 133–153 (IKVW…LGVV). Arg154 is a binding site for a 1,2-diacyl-sn-glycero-3-phospho-(1'-sn-glycerol). A run of 3 helical transmembrane segments spans residues 189 to 209 (LYEA…LVWV), 217 to 237 (GFIA…VEFF), and 247 to 267 (LFGG…LIGL).

The protein belongs to the Lgt family.

It localises to the cell inner membrane. The catalysed reaction is L-cysteinyl-[prolipoprotein] + a 1,2-diacyl-sn-glycero-3-phospho-(1'-sn-glycerol) = an S-1,2-diacyl-sn-glyceryl-L-cysteinyl-[prolipoprotein] + sn-glycerol 1-phosphate + H(+). The protein operates within protein modification; lipoprotein biosynthesis (diacylglyceryl transfer). Functionally, catalyzes the transfer of the diacylglyceryl group from phosphatidylglycerol to the sulfhydryl group of the N-terminal cysteine of a prolipoprotein, the first step in the formation of mature lipoproteins. This Brucella anthropi (strain ATCC 49188 / DSM 6882 / CCUG 24695 / JCM 21032 / LMG 3331 / NBRC 15819 / NCTC 12168 / Alc 37) (Ochrobactrum anthropi) protein is Phosphatidylglycerol--prolipoprotein diacylglyceryl transferase.